Here is a 264-residue protein sequence, read N- to C-terminus: MRLRPLPLVVVPGLLQLLFCDSEKVVHATEGLDWEDKDATGTLVGNVVHSRIINPLRLFVKQSPVPKPGHLAYADSMENFWDWLANITEVQEPLARTKRRPIVKTGKFKKMFGWGDFHSNIKTVKLNLLITGKIVDHGNGTFSVYFRHNSTGLGNVSVSLVPPSKVVEFEVSPQSTLETKESKSFNCRIEYEKTDRAKKTALCNFDPSKICYQEQTQSHVSWLCSKPFKVICIYIAFYSVDYKLVQKVCPDYNYHSETPYLSSG.

The first 22 residues, 1-22 (MRLRPLPLVVVPGLLQLLFCDS), serve as a signal peptide directing secretion. The tract at residues 23-90 (EKVVHATEGL…WDWLANITEV (68 aa)) is II. Asn-86, Asn-139, Asn-149, and Asn-155 each carry an N-linked (GlcNAc...) asparagine glycan. An III region spans residues 91 to 169 (QEPLARTKRR…LVPPSKVVEF (79 aa)). Residues 170-178 (EVSPQSTLE) are IV (linker domain). The interval 179–264 (TKESKSFNCR…HSETPYLSSG (86 aa)) is v (Cys-rich).

Belongs to the neurexophilin family. In terms of processing, may be proteolytically processed at the boundary between the N-terminal non-conserved and the central conserved domain in neuron-like cells. As to expression, brain, only in a scattered subpopulation of neurons that probably represent inhibitory interneurons.

It is found in the secreted. Functionally, may be signaling molecules that resemble neuropeptides and that act by binding to alpha-neurexins and possibly other receptors. The protein is Neurexophilin-2 (NXPH2) of Bos taurus (Bovine).